Consider the following 218-residue polypeptide: UPF0502 protein Mmwyl1_3509 (218 aa).

This sequence belongs to the UPF0502 family.

This chain is UPF0502 protein Mmwyl1_3509, found in Marinomonas sp. (strain MWYL1).